The following is a 189-amino-acid chain: MAIKDAIEKIVSYFDADEVTDHEDVAKERPVKVQKTEQTPSQQQRKPERPQETVPPRRQHIKSDVQETQVLRSLSLSRSQVNQGSQQMNTTKTTIAIKYPKKYEDAQEIVELLIENECVLIDFQYMLEAQARRCLDFIDGASKVLTGNLQKVGSSMYLLTPINVVVDIEEIGLSHGNQESTFDFDMKRR.

Residues 18–64 (EVTDHEDVAKERPVKVQKTEQTPSQQQRKPERPQETVPPRRQHIKSD) form a disordered region. A compositionally biased stretch (basic and acidic residues) spans 22 to 35 (HEDVAKERPVKVQK).

The protein belongs to the SepF family. In terms of assembly, homodimer. Interacts with FtsZ.

Its subcellular location is the cytoplasm. In terms of biological role, cell division protein that is part of the divisome complex and is recruited early to the Z-ring. Probably stimulates Z-ring formation, perhaps through the cross-linking of FtsZ protofilaments. Its function overlaps with FtsA. This is Cell division protein SepF from Streptococcus thermophilus (strain ATCC BAA-250 / LMG 18311).